We begin with the raw amino-acid sequence, 176 residues long: Large ribosomal subunit protein uL10 (176 aa).

This sequence belongs to the universal ribosomal protein uL10 family. As to quaternary structure, part of the ribosomal stalk of the 50S ribosomal subunit. The N-terminus interacts with L11 and the large rRNA to form the base of the stalk. The C-terminus forms an elongated spine to which L12 dimers bind in a sequential fashion forming a multimeric L10(L12)X complex.

Its function is as follows. Forms part of the ribosomal stalk, playing a central role in the interaction of the ribosome with GTP-bound translation factors. The polypeptide is Large ribosomal subunit protein uL10 (rplJ) (Streptomyces antibioticus).